A 188-amino-acid polypeptide reads, in one-letter code: ATP synthase subunit b (188 aa).

The helical transmembrane segment at 30 to 50 (IVWSLIPFLIILIVFWKLVLP) threads the bilayer.

It belongs to the ATPase B chain family. As to quaternary structure, F-type ATPases have 2 components, F(1) - the catalytic core - and F(0) - the membrane proton channel. F(1) has five subunits: alpha(3), beta(3), gamma(1), delta(1), epsilon(1). F(0) has three main subunits: a(1), b(2) and c(10-14). The alpha and beta chains form an alternating ring which encloses part of the gamma chain. F(1) is attached to F(0) by a central stalk formed by the gamma and epsilon chains, while a peripheral stalk is formed by the delta and b chains.

It localises to the cell membrane. Functionally, f(1)F(0) ATP synthase produces ATP from ADP in the presence of a proton or sodium gradient. F-type ATPases consist of two structural domains, F(1) containing the extramembraneous catalytic core and F(0) containing the membrane proton channel, linked together by a central stalk and a peripheral stalk. During catalysis, ATP synthesis in the catalytic domain of F(1) is coupled via a rotary mechanism of the central stalk subunits to proton translocation. In terms of biological role, component of the F(0) channel, it forms part of the peripheral stalk, linking F(1) to F(0). The sequence is that of ATP synthase subunit b from Corynebacterium glutamicum (strain R).